Reading from the N-terminus, the 1020-residue chain is Fanconi-associated nuclease 1 (1020 aa).

Over residues 1–11 (MPSQRKSPDQK) the composition is skewed to basic and acidic residues. Residues 1–24 (MPSQRKSPDQKRPRRSLSTSKTAK) are disordered. A D-box motif is present at residues 14–22 (RRSLSTSKT). Residues 41–69 (KLACSTCHKMVPRYDLIRHLDESCANNGV) form a UBZ4-type zinc finger. Positions 44, 47, 59, and 64 each coordinate Zn(2+). Positions 173-208 (KNEGLASQCPQTSPSTPGTSLTDNCPEMEDKDEVLN) are disordered. Positions 180–195 (QCPQTSPSTPGTSLTD) are enriched in polar residues. The KEN box motif lies at 212–214 (KEN). Residues 224–242 (ENASEQKVKNNKITGDESQ) are compositionally biased toward basic and acidic residues. Disordered stretches follow at residues 224 to 252 (ENAS…PALT) and 269 to 288 (LVSN…ESAR). Polar residues predominate over residues 269–278 (LVSNTKSSPG). Residues 673 to 737 (SSRAVEVLER…AIRCIREGLA (65 aa)) adopt a coiled-coil conformation. Positions 837, 963, 978, and 979 each coordinate Mn(2+). Residues 898–1010 (AESLRAWVGE…GADVEVCHVV (113 aa)) enclose the VRR-NUC domain.

It belongs to the FAN1 family. In terms of assembly, interacts with FANCD2 (when monoubiquitinated). Interacts with FANCI, MLH1, MLH3 and PMS2. Mn(2+) serves as cofactor. It depends on Mg(2+) as a cofactor. Ubiquitinated and degraded during mitotic exit by the APC/C-Cdh1 complex.

The protein localises to the nucleus. It catalyses the reaction Hydrolytically removes 5'-nucleotides successively from the 3'-hydroxy termini of 3'-hydroxy-terminated oligonucleotides.. In terms of biological role, nuclease required for the repair of DNA interstrand cross-links (ICL) recruited at sites of DNA damage by monoubiquitinated FANCD2. Specifically involved in repair of ICL-induced DNA breaks by being required for efficient homologous recombination, probably in the resolution of homologous recombination intermediates. Not involved in DNA double-strand breaks resection. Acts as a 5'-3' exonuclease that anchors at a cut end of DNA and cleaves DNA successively at every third nucleotide, allowing to excise an ICL from one strand through flanking incisions. Probably keeps excising with 3'-flap annealing until it reaches and unhooks the ICL. Acts at sites that have a 5'-terminal phosphate anchor at a nick or a 1- or 2-nucleotide flap and is augmented by a 3' flap. Also has endonuclease activity toward 5'-flaps. The chain is Fanconi-associated nuclease 1 from Mus musculus (Mouse).